We begin with the raw amino-acid sequence, 178 residues long: Inorganic pyrophosphatase (178 aa).

Lys-30, Arg-44, and Tyr-56 together coordinate substrate. Residues Asp-66, Asp-71, and Asp-103 each contribute to the Mg(2+) site. A substrate-binding site is contributed by Tyr-142.

It belongs to the PPase family. In terms of assembly, homohexamer. Mg(2+) is required as a cofactor.

The protein resides in the cytoplasm. It catalyses the reaction diphosphate + H2O = 2 phosphate + H(+). Functionally, catalyzes the hydrolysis of inorganic pyrophosphate (PPi) forming two phosphate ions. The protein is Inorganic pyrophosphatase of Xylella fastidiosa (strain 9a5c).